A 35-amino-acid chain; its full sequence is Photosystem II reaction center protein T (35 aa).

The helical transmembrane segment at 3-23 (ALVYTFLLVSTLGIIFFAIFF) threads the bilayer.

The protein belongs to the PsbT family. In terms of assembly, PSII is composed of 1 copy each of membrane proteins PsbA, PsbB, PsbC, PsbD, PsbE, PsbF, PsbH, PsbI, PsbJ, PsbK, PsbL, PsbM, PsbT, PsbY, PsbZ, Psb30/Ycf12, at least 3 peripheral proteins of the oxygen-evolving complex and a large number of cofactors. It forms dimeric complexes.

The protein resides in the plastid. The protein localises to the chloroplast thylakoid membrane. Its function is as follows. Found at the monomer-monomer interface of the photosystem II (PS II) dimer, plays a role in assembly and dimerization of PSII. PSII is a light-driven water plastoquinone oxidoreductase, using light energy to abstract electrons from H(2)O, generating a proton gradient subsequently used for ATP formation. The protein is Photosystem II reaction center protein T of Cedrus deodara (Deodar cedar).